Here is a 334-residue protein sequence, read N- to C-terminus: MFRRERSIPLRGSAAALSNNLSVLQLPARDLTHFGVVHGPSAQLLSAAPEGVPLAQRQLHVKEGAGVSPPLITQVHWCVLPFRVLLVLTSHRGIQMYESDGSVMVYWHALDSGDASSVQAMFARGIAASVHFICVGTWSGRILVFDIPAKGPNIVLNEELAGHQTPITDIATERAQGQDGVADMVTADDSGVLCVWRSGPEFTLLTRIAGFGVPCPSVQLWQGIVAAGYGNGQVRLYDAGTGALHIQISAHARTISALDLAPEVGKLLSAAEDTFVHIWKLNRNPESGSIEVEHCHGECISDTQVCGARFCDPGGSSFAVTGYDLAEILRFGSV.

WD repeat units follow at residues 162-206, 208-247, and 250-289; these read GHQT…TLLT, IAGFGVPCPSVQLWQGIVAAGYGNGQVRLYDAGTGALHIQ, and AHARTISALDLAPEVGKLLSAAEDTFVHIWKLNRNPESGS.

Homodimer and homotrimer; forms tight forms of dimers and trimers. Interacts with IZUMO1 and IZUMO1R/JUNO. Post-translationally, cross-linked to tightly form both dimers and trimers by TGM2. Cross-linking enhances the activation of EGF receptor-mediated signaling pathway. Cross-linking is inhibited by EGF. Ubiquitinated. EGF increases ubiquitination. As to expression, widely expressed in the ovary and testis (at protein level).

It localises to the vesicle. The protein localises to the cytoplasm. Its subcellular location is the cell membrane. Its function is as follows. Plays a role in the adhesion and fusion of the sperm-oocyte membrane through its interactions with IZUMO1 and IZUMO1R/JUNO. When cross-linked to form dimers and trimers, it has a regulatory effect on ERK signaling pathway activity in response to EGF stimulation. Colocalizes with the EGF receptor in WDR54-specific vesicle where it sustains the internalization and controls the degradation of the EGF receptor after EGF stimulation. The chain is WD repeat domain 54 (Wdr54) from Rattus norvegicus (Rat).